The primary structure comprises 221 residues: uncharacterized protein (221 aa).

The next 6 membrane-spanning stretches (helical) occupy residues 33 to 55 (YFLL…ISYI), 70 to 92 (FGYR…QKIV), 99 to 121 (LEML…FIII), 125 to 147 (YGAY…YTLL), 154 to 176 (YFND…SFWI), and 186 to 208 (IISM…ITLI).

It is found in the cell membrane. This is an uncharacterized protein from Aquifex aeolicus (strain VF5).